The primary structure comprises 332 residues: Ketol-acid reductoisomerase (NADP(+)) (332 aa).

A KARI N-terminal Rossmann domain is found at 2–182 (AKVYIDKDAS…GATRAGVIET (181 aa)). NADP(+) contacts are provided by residues 25–28 (YGSQ), Ser-53, and 83–86 (DMVQ). Residue His-108 is part of the active site. Position 134 (Gly-134) interacts with NADP(+). The region spanning 183–328 (TFKEETETDL…RQIREISLRG (146 aa)) is the KARI C-terminal knotted domain. Residues Asp-191, Glu-195, Glu-227, and Glu-231 each contribute to the Mg(2+) site. Substrate is bound at residue Ser-252.

It belongs to the ketol-acid reductoisomerase family. The cofactor is Mg(2+).

The enzyme catalyses (2R)-2,3-dihydroxy-3-methylbutanoate + NADP(+) = (2S)-2-acetolactate + NADPH + H(+). The catalysed reaction is (2R,3R)-2,3-dihydroxy-3-methylpentanoate + NADP(+) = (S)-2-ethyl-2-hydroxy-3-oxobutanoate + NADPH + H(+). It participates in amino-acid biosynthesis; L-isoleucine biosynthesis; L-isoleucine from 2-oxobutanoate: step 2/4. The protein operates within amino-acid biosynthesis; L-valine biosynthesis; L-valine from pyruvate: step 2/4. Functionally, involved in the biosynthesis of branched-chain amino acids (BCAA). Catalyzes an alkyl-migration followed by a ketol-acid reduction of (S)-2-acetolactate (S2AL) to yield (R)-2,3-dihydroxy-isovalerate. In the isomerase reaction, S2AL is rearranged via a Mg-dependent methyl migration to produce 3-hydroxy-3-methyl-2-ketobutyrate (HMKB). In the reductase reaction, this 2-ketoacid undergoes a metal-dependent reduction by NADPH to yield (R)-2,3-dihydroxy-isovalerate. The protein is Ketol-acid reductoisomerase (NADP(+)) of Sulfurisphaera tokodaii (strain DSM 16993 / JCM 10545 / NBRC 100140 / 7) (Sulfolobus tokodaii).